Consider the following 214-residue polypeptide: Adenylate kinase (214 aa).

10–15 (GAGKGT) is a binding site for ATP. The interval 30 to 59 (STGDMLRAAIKAGTELGLKAKAVMDAGQLV) is NMP. AMP contacts are provided by residues threonine 31, arginine 36, 57-59 (QLV), 85-88 (GFPR), and glutamine 92. The segment at 122 to 159 (GRRVHSGSGRTYHVVFNPPKVEGKDDVTGEDLVIRADD) is LID. Residues arginine 123 and 132–133 (TY) each bind ATP. 2 residues coordinate AMP: arginine 156 and arginine 167. Glutamine 200 contacts ATP.

Belongs to the adenylate kinase family. As to quaternary structure, monomer.

It localises to the cytoplasm. It catalyses the reaction AMP + ATP = 2 ADP. It functions in the pathway purine metabolism; AMP biosynthesis via salvage pathway; AMP from ADP: step 1/1. In terms of biological role, catalyzes the reversible transfer of the terminal phosphate group between ATP and AMP. Plays an important role in cellular energy homeostasis and in adenine nucleotide metabolism. This chain is Adenylate kinase, found in Aeromonas hydrophila subsp. hydrophila (strain ATCC 7966 / DSM 30187 / BCRC 13018 / CCUG 14551 / JCM 1027 / KCTC 2358 / NCIMB 9240 / NCTC 8049).